We begin with the raw amino-acid sequence, 380 residues long: Ribosomal RNA large subunit methyltransferase F (380 aa).

2 disordered regions span residues 1–54 and 260–279; these read MSHK…PRNA and SQVMSPQVQPSGKVKPATDK. Residues 21–32 are compositionally biased toward low complexity; the sequence is QRQVVSKSSLQK. Over residues 44-53 the composition is skewed to basic residues; the sequence is QKSKALHPRN. Over residues 260 to 270 the composition is skewed to low complexity; the sequence is SQVMSPQVQPS.

Belongs to the methyltransferase superfamily. METTL16/RlmF family.

It localises to the cytoplasm. It catalyses the reaction adenosine(1618) in 23S rRNA + S-adenosyl-L-methionine = N(6)-methyladenosine(1618) in 23S rRNA + S-adenosyl-L-homocysteine + H(+). Its function is as follows. Specifically methylates the adenine in position 1618 of 23S rRNA. This is Ribosomal RNA large subunit methyltransferase F from Shewanella pealeana (strain ATCC 700345 / ANG-SQ1).